Consider the following 203-residue polypeptide: MRLFVGLGNPGARYAANRHNIGFMALDAVARRHRAAPWRRKFQGEASEAVIGTERVLLLKPETYMNESGRAVAEAQRFYKIALDDVVVFHDELDLAPAKVRVKKGGGNAGHNGLRSITAQCGNEYWRVRLGIGHPGDKALVHAYVLNDFAKAERPWVDDLCDALADHAALLAAGEDANFQNRIHLALQGRGWDDVKRVGDKQA.

Position 14 (tyrosine 14) interacts with tRNA. The active-site Proton acceptor is histidine 19. TRNA-binding residues include tyrosine 64, asparagine 66, and asparagine 112.

It belongs to the PTH family. Monomer.

It localises to the cytoplasm. It carries out the reaction an N-acyl-L-alpha-aminoacyl-tRNA + H2O = an N-acyl-L-amino acid + a tRNA + H(+). Its function is as follows. Hydrolyzes ribosome-free peptidyl-tRNAs (with 1 or more amino acids incorporated), which drop off the ribosome during protein synthesis, or as a result of ribosome stalling. Functionally, catalyzes the release of premature peptidyl moieties from peptidyl-tRNA molecules trapped in stalled 50S ribosomal subunits, and thus maintains levels of free tRNAs and 50S ribosomes. This Methylobacterium sp. (strain 4-46) protein is Peptidyl-tRNA hydrolase.